We begin with the raw amino-acid sequence, 427 residues long: tRNA(Ile)-lysidine synthase (427 aa).

An ATP-binding site is contributed by 25–30; that stretch reads SGGLDS.

This sequence belongs to the tRNA(Ile)-lysidine synthase family.

It is found in the cytoplasm. The enzyme catalyses cytidine(34) in tRNA(Ile2) + L-lysine + ATP = lysidine(34) in tRNA(Ile2) + AMP + diphosphate + H(+). Ligates lysine onto the cytidine present at position 34 of the AUA codon-specific tRNA(Ile) that contains the anticodon CAU, in an ATP-dependent manner. Cytidine is converted to lysidine, thus changing the amino acid specificity of the tRNA from methionine to isoleucine. This is tRNA(Ile)-lysidine synthase from Histophilus somni (strain 129Pt) (Haemophilus somnus).